A 466-amino-acid polypeptide reads, in one-letter code: Cysteine--tRNA ligase (466 aa).

C28 provides a ligand contact to Zn(2+). The 'HIGH' region motif lies at 30-40 (PTVYNYIHIGN). C208, H233, and E237 together coordinate Zn(2+). Positions 265–269 (KMSKS) match the 'KMSKS' region motif. K268 is a binding site for ATP.

The protein belongs to the class-I aminoacyl-tRNA synthetase family. Monomer. Zn(2+) serves as cofactor.

Its subcellular location is the cytoplasm. It carries out the reaction tRNA(Cys) + L-cysteine + ATP = L-cysteinyl-tRNA(Cys) + AMP + diphosphate. This Staphylococcus aureus (strain Mu3 / ATCC 700698) protein is Cysteine--tRNA ligase.